The sequence spans 381 residues: NF-kappa-B inhibitor-like protein 1 (381 aa).

The disordered stretch occupies residues 1-32 (MSNPSPQAPEEEASTSVCRPQSSMASVSRRHR). Positions 14-26 (STSVCRPQSSMAS) are enriched in polar residues. ANK repeat units lie at residues 64–93 (GQPP…DPAH) and 97–133 (HGDT…IKNK). Disordered regions lie at residues 129–166 (GIKN…REWR), 186–242 (DDAS…QEEE), and 257–294 (LCES…RGSL). S150 is subject to Phosphoserine. Residues 150–159 (SAEEEEDEEV) show a composition bias toward acidic residues. Composition is skewed to basic and acidic residues over residues 204–228 (RLAR…RPPR) and 257–270 (LCES…EAQG).

In terms of assembly, interacts with CACTIN (via N-terminal domain); the interaction occurs in a pro-inflammatory-independent manner.

The protein resides in the nucleus. Functionally, involved in the regulation of innate immune response. Acts as negative regulator of Toll-like receptor and interferon-regulatory factor (IRF) signaling pathways. Contributes to the negative regulation of transcriptional activation of NF-kappa-B target genes in response to endogenous pro-inflammatory stimuli. This chain is NF-kappa-B inhibitor-like protein 1 (Nfkbil1), found in Rattus norvegicus (Rat).